Reading from the N-terminus, the 296-residue chain is uncharacterized protein (296 aa).

Positions 1–20 are cleaved as a signal peptide; sequence MKKLLLIIITVFFAFNVAQA.

This is an uncharacterized protein from Rickettsia felis (strain ATCC VR-1525 / URRWXCal2) (Rickettsia azadi).